We begin with the raw amino-acid sequence, 357 residues long: DNA replication and repair protein RecF (357 aa).

Position 31-38 (31-38 (GQNGAGKT)) interacts with ATP.

Belongs to the RecF family.

Its subcellular location is the cytoplasm. In terms of biological role, the RecF protein is involved in DNA metabolism; it is required for DNA replication and normal SOS inducibility. RecF binds preferentially to single-stranded, linear DNA. It also seems to bind ATP. The protein is DNA replication and repair protein RecF of Coxiella burnetii (strain Dugway 5J108-111).